The chain runs to 224 residues: Cytidylate kinase (224 aa).

11–19 is a binding site for ATP; it reads GPAAAGKST.

It belongs to the cytidylate kinase family. Type 1 subfamily.

It localises to the cytoplasm. The enzyme catalyses CMP + ATP = CDP + ADP. It carries out the reaction dCMP + ATP = dCDP + ADP. In Listeria monocytogenes serovar 1/2a (strain ATCC BAA-679 / EGD-e), this protein is Cytidylate kinase.